Here is a 284-residue protein sequence, read N- to C-terminus: Zinc finger protein ZAT3 (284 aa).

The span at 1-12 shows a compositional bias: basic and acidic residues; sequence MNNNHSYDDRSF. The interval 1-76 is disordered; sequence MNNNHSYDDR…KPDPNAPKIT (76 aa). Residues 18–37 are compositionally biased toward polar residues; the sequence is PSNTSNPNPNLQFALSSSYD. Positions 47–62 are enriched in low complexity; that stretch reads TVASSSSSSPKSASKP. 3 C2H2-type zinc fingers span residues 77 to 99, 162 to 184, and 222 to 244; these read RPCTECGRKFWSWKALFGHMRCH, FECGGCKKVFGSHQALGGHRASH, and HKCNICFRVFSSGQALGGHMRCH.

Interacts (via the EAR motif) with TPL. In terms of tissue distribution, expressed exclusively in pollen.

Its subcellular location is the nucleus. Mediates the regulation of male germ cell division by DUO1. The protein is Zinc finger protein ZAT3 of Arabidopsis thaliana (Mouse-ear cress).